A 420-amino-acid polypeptide reads, in one-letter code: Glucose-1-phosphate adenylyltransferase (420 aa).

Residues Tyr-107, Gly-173, 188-189 (EK), and Ser-206 contribute to the alpha-D-glucose 1-phosphate site.

This sequence belongs to the bacterial/plant glucose-1-phosphate adenylyltransferase family. Homotetramer.

It catalyses the reaction alpha-D-glucose 1-phosphate + ATP + H(+) = ADP-alpha-D-glucose + diphosphate. It functions in the pathway glycan biosynthesis; glycogen biosynthesis. Its function is as follows. Involved in the biosynthesis of ADP-glucose, a building block required for the elongation reactions to produce glycogen. Catalyzes the reaction between ATP and alpha-D-glucose 1-phosphate (G1P) to produce pyrophosphate and ADP-Glc. The sequence is that of Glucose-1-phosphate adenylyltransferase from Shewanella oneidensis (strain ATCC 700550 / JCM 31522 / CIP 106686 / LMG 19005 / NCIMB 14063 / MR-1).